We begin with the raw amino-acid sequence, 690 residues long: Protein arginine N-methyltransferase 7 (690 aa).

2 SAM-dependent MTase PRMT-type domains span residues 5 to 355 (FQDS…FSLW) and 364 to 690 (KEPL…EEEQ).

Belongs to the class I-like SAM-binding methyltransferase superfamily. Protein arginine N-methyltransferase family. PRMT7 subfamily.

Essential arginine methyltransferase that can both catalyze the formation of omega-N monomethylarginine (MMA) and symmetrical dimethylarginine (sDMA). Specifically mediates the symmetrical dimethylation of arginine residues in the small nuclear ribonucleoproteins SmD1 and SmD3. This Anopheles gambiae (African malaria mosquito) protein is Protein arginine N-methyltransferase 7 (Art7).